The sequence spans 204 residues: Ancillary SecYEG translocon subunit (204 aa).

Over 1-23 the chain is Cytoplasmic; it reads MAYSIEEEQEINQLKDWWKENGK. The chain crosses the membrane as a helical span at residues 24 to 42; that stretch reads TIIVAFILGVGGMFGWRYW. The Periplasmic segment spans residues 43–204; it reads QTHQAEQIAQ…QMAKMKLNNL (162 aa).

The protein belongs to the YfgM family. Interacts with the SecYEG translocon. Forms a complex with PpiD.

Its subcellular location is the cell inner membrane. May mediate protein transfer from the SecYEG translocon to the periplasmic chaperone network via its periplasmic C-terminal region. This is Ancillary SecYEG translocon subunit from Haemophilus influenzae (strain ATCC 51907 / DSM 11121 / KW20 / Rd).